Consider the following 359-residue polypeptide: MKPFLRSQLARHAQRLGELDFLLARPDIMADMVQYRSIAREHAEVTQVAGRYARYLQREADLGAARELLADPGMAELAQEEIDSSQTELRQLEDELQRLLLPKEPDDARNAFVEIRAGTGGDESALFAGDLTRMYTRYAARRGWQVQVLSENPAELGGYKEIVLRIDGEQVYGTLKFESGGHRVQRVPATETQGRVHTSACTVAVMPEPDPARAIALNPAELRIDTFRASGAGGQHINKTDSAVRVVHLPTGIVAECQDGRSQHGNKARALQVLQARLQEKERSERAAKEAALRKGLIGSGERSDRIRTYNFPQGRLTDHRIQLTLYQLQQLLDGELDPMLQALGHAREAEQLQELERG.

An N5-methylglutamine modification is found at glutamine 235.

The protein belongs to the prokaryotic/mitochondrial release factor family. Methylated by PrmC. Methylation increases the termination efficiency of RF1.

It localises to the cytoplasm. Functionally, peptide chain release factor 1 directs the termination of translation in response to the peptide chain termination codons UAG and UAA. This Verminephrobacter eiseniae (strain EF01-2) protein is Peptide chain release factor 1.